Consider the following 950-residue polypeptide: Valine--tRNA ligase (950 aa).

The short motif at 40-50 (PNVTGSLHMGH) is the 'HIGH' region element. The 'KMSKS' region signature appears at 551-555 (KMSKS). ATP is bound at residue K554. Positions 881–950 (LIDKSAELGR…AEQRQKIAAL (70 aa)) form a coiled coil.

Belongs to the class-I aminoacyl-tRNA synthetase family. ValS type 1 subfamily. As to quaternary structure, monomer.

The protein resides in the cytoplasm. It carries out the reaction tRNA(Val) + L-valine + ATP = L-valyl-tRNA(Val) + AMP + diphosphate. Its function is as follows. Catalyzes the attachment of valine to tRNA(Val). As ValRS can inadvertently accommodate and process structurally similar amino acids such as threonine, to avoid such errors, it has a 'posttransfer' editing activity that hydrolyzes mischarged Thr-tRNA(Val) in a tRNA-dependent manner. In Pseudomonas aeruginosa (strain ATCC 15692 / DSM 22644 / CIP 104116 / JCM 14847 / LMG 12228 / 1C / PRS 101 / PAO1), this protein is Valine--tRNA ligase.